Reading from the N-terminus, the 340-residue chain is Heat-inducible transcription repressor HrcA (340 aa).

The protein belongs to the HrcA family.

Negative regulator of class I heat shock genes (grpE-dnaK-dnaJ and groELS operons). Prevents heat-shock induction of these operons. The chain is Heat-inducible transcription repressor HrcA from Chromobacterium violaceum (strain ATCC 12472 / DSM 30191 / JCM 1249 / CCUG 213 / NBRC 12614 / NCIMB 9131 / NCTC 9757 / MK).